A 653-amino-acid chain; its full sequence is MNAADLGNTIISAEDSTLEWDRAGTETAATGVEVIQAVVKRLPNAPGVYRMVNTEGDVLYVGKARSLKKRVTNYAQGRGHSNRIERMIRETATMEFVVTRTETEALLLEANLIKRLRPRFNVLMRDDKSFPYILLTGNHPAPGIFKHRGARSRRGDYFGPFASAGAVGRTINSLQRAFLLRTCTDSVFESRTRPCLLYQIKRCSGPCTREISVEDYATLVKEAKDFLSGRSSTVKAEIATAMQEASQALDFERAAIYRDRLAALSHVQSHQGINPQGLEEADVFAIHQEGGQTCIQVFFFRTGQNWGNRAYFPKADPALGHGEVLGSFLAQFYDDKPCPRLILLSHPVEDQDLLAEALSARAGRKVQVSVPARGEKKDLTDHALQNAREALGRRLAETSSQARLLEGLAETFGLEAAPRRIEVYDNSHIMGTNAVGAMIVAGPEGFVKNQYRKFNIRSAEITPGDDFGMMREVMQRRFARLIKEQGLPGNGSEAEDSDASFPAWPDLILIDGGQGQMSAVRQILDDLGIADLVTAIGVAKGVDRDAGRERFFMEGRPPFTLPPRDPVLYFVQRLRDEAHRFAIGSHRARRKKEMVKNPLDEIAGIGPGRKRALLHHFGTAKAVSRAAVEDLMEVGGISESIARLIYNHFHESG.

One can recognise a GIY-YIG domain in the interval N44–V122. Residues S232 to V267 enclose the UVR domain.

It belongs to the UvrC family. As to quaternary structure, interacts with UvrB in an incision complex.

The protein localises to the cytoplasm. Functionally, the UvrABC repair system catalyzes the recognition and processing of DNA lesions. UvrC both incises the 5' and 3' sides of the lesion. The N-terminal half is responsible for the 3' incision and the C-terminal half is responsible for the 5' incision. The protein is UvrABC system protein C of Chelativorans sp. (strain BNC1).